Consider the following 217-residue polypeptide: N-(5'-phosphoribosyl)anthranilate isomerase (217 aa).

The protein belongs to the TrpF family.

It catalyses the reaction N-(5-phospho-beta-D-ribosyl)anthranilate = 1-(2-carboxyphenylamino)-1-deoxy-D-ribulose 5-phosphate. It participates in amino-acid biosynthesis; L-tryptophan biosynthesis; L-tryptophan from chorismate: step 3/5. The chain is N-(5'-phosphoribosyl)anthranilate isomerase from Chlorobium luteolum (strain DSM 273 / BCRC 81028 / 2530) (Pelodictyon luteolum).